The following is a 443-amino-acid chain: Probable ribonuclease FAU-1 (443 aa).

It belongs to the FAU-1 family.

In terms of biological role, probable RNase involved in rRNA stability through maturation and/or degradation of precursor rRNAs. Binds to RNA in loop regions with AU-rich sequences. This chain is Probable ribonuclease FAU-1, found in Pyrobaculum aerophilum (strain ATCC 51768 / DSM 7523 / JCM 9630 / CIP 104966 / NBRC 100827 / IM2).